The following is a 227-amino-acid chain: UPF0758 protein Psyc_1834 (227 aa).

In terms of domain architecture, MPN spans 102–224 (GLGRSQMVKD…TLSYAENCLA (123 aa)). Positions 173, 175, and 186 each coordinate Zn(2+). Positions 173 to 186 (HNHPHTDATPSTAD) match the JAMM motif motif.

This sequence belongs to the UPF0758 family.

This is UPF0758 protein Psyc_1834 from Psychrobacter arcticus (strain DSM 17307 / VKM B-2377 / 273-4).